The chain runs to 1296 residues: MAQTPDDISCELRGEITRFLWPKEAELLLKTWLPQEGAEQSHILALLRWRAYLLHTCLPLRVDCTFSYLEVQAMALQETPPRVTFELESLPELVLEFPCVAALEQLAQHVAAAIKKVFPRSTLGKLFRKPTPSSLLARLERSHPLESTIPSSPCGGFLETYEALCDYNGFPFREEIQWDVDTIYHRQGCRHFCLGDFSHFGSRDLALSVAALSYNLWFRRLSCEDMKLSLEVSEQILHMTSQSSYLEELVLEACGLRGDFVRRLAQALAGHFNSGLRELSLSGNLLDDRGMRALGRALATNATFDSTLTHLDLSGNPGALGPSQDSGGLYTFLSRPNVLAYLNLAGTDATLGTLFTALAGGCCSSLTHLEASRNIFSRMKSQAAPAALQRFLGGTRMLRHLGLAGCKLPPEALRALLEGLALNTQIHDLHLDLSACELRSVGAQVIQDLVCDAGALSSLDLSDNGFGSDMVTLVLAIGRSRSLKHVALGRNFNVRCKETLDDVLHRIAQLMQDDDCPLQSLSVAESRLKQGASILIRALGTNPKLTALDISGNAIGDAGAKMLAKALRVNTRLRSVIWDRNNTSALGLLDVAQALEQNHSLKSMPLPLNDVTQAHRSRPELTTRAVHQIQACLWRNNQVDSTSDLKPCLQPLGLISDHSEQEVNELCQSVQEHMELLGCGAGPQGEVAVHQAEDAIQNANFSLSILPILYEAGRSPSHHWQLQQKLESLLGQVGEICRQDIQDFTQTTLDTTRSLCPQMLQTPGWRKQLEGVLVGSGGLPELLPEHLLQDAFSRLRDMRLSITGTLAESIVAQALAGLHAARDRLVERLTQQAPVTMAPAVPPLGGNELSPLETGGLEELFFPTEKEEEREKVLLRKRNGTPSWQLRGKMQSRRLGRLHAVAEKHWAAGPRDTPASAVYQRVDVCVGWVPPALLQEGNGLTARVDEGVEEFFSKRLIQQDHFWAPEEDPATEGGATPVPRTLRKKLGTLFAFKKPRSTRGPRPDLETSPGAAARARKSTLGDLLRPPARPGRGEEPGGAEGGTSSPDPARRNRPRYTRESKAYSMILLPAEEEAAVGTRPDKRRPLERGDTELAPSFEQRVQVMLQRIGVSRASGGAESKRKQSKDGEIKKAGSDGDIMDSSTETPPISIKSRTHSVSADPSCRPGPGGQGPESATWKTLGQQLNAELRGRGWGQQDGPGPPSPCPSPSPRRTSPAPDILSLPEDPCLGPRNEERPLRLQRSPVLKRRPKLEAPPSPSLGSGLGSKPLPPYPTEPSSPERSPPSPATDQRGGGPNP.

LRR repeat units follow at residues 63–87 (DCTFSYLEVQAMALQETPPRVTFEL), 88–110 (ESLPELVLEFPCVAALEQLAQHV), 248–271 (ELVLEACGLRGDFVRRLAQALAGH), 273–296 (NSGLRELSLSGNLLDDRGMRALGR), 305–328 (DSTLTHLDLSGNPGALGPSQDSGG), 363–386 (CSSLTHLEASRNIFSRMKSQAAPA), 395–415 (TRMLRHLGLAGCKLPPEALRA), 426–448 (IHDLHLDLSACELRSVGAQVIQD), 453–477 (AGALSSLDLSDNGFGSDMVTLVLAI), 480–506 (SRSLKHVALGRNFNVRCKETLDDVLHR), 515–538 (DCPLQSLSVAESRLKQGASILIRA), 542–565 (NPKLTALDISGNAIGDAGAKMLAK), 570–594 (NTRLRSVIWDRNNTSALGLLDVAQA), 598–621 (NHSLKSMPLPLNDVTQAHRSRPEL), and 836–859 (TMAPAVPPLGGNELSPLETGGLEE). The tract at residues 507–601 (IAQLMQDDDC…AQALEQNHSL (95 aa)) is tropomodulin-like. A necessary for localization at the cell membrane region spans residues 975 to 1002 (ATPVPRTLRKKLGTLFAFKKPRSTRGPR). The tract at residues 988–1296 (TLFAFKKPRS…TDQRGGGPNP (309 aa)) is disordered. A Phosphoserine modification is found at serine 1008. Composition is skewed to basic and acidic residues over residues 1079–1091 (RPDKRRPLERGDT) and 1118–1134 (ESKRKQSKDGEIKKAGS). Position 1134 is a phosphoserine (serine 1134). Threonine 1145 is modified (phosphothreonine). Residues 1176–1185 (TWKTLGQQLN) show a composition bias toward polar residues. Position 1191 is an omega-N-methylarginine (arginine 1191). Pro residues-rich tracts occupy residues 1199–1209 (PGPPSPCPSPS) and 1267–1285 (PLPPYPTEPSSPERSPPSP). A phosphoserine mark is found at serine 1203 and serine 1281.

The protein belongs to the CARMIL family. Forms homodimers. Interacts (via C-terminus) with heterodimeric capping protein (CP); the interaction inhibits CP activity and hence promotes actin polymerization at the barbed end of actin filaments.

It localises to the cytoplasm. The protein localises to the cytoskeleton. The protein resides in the cell membrane. Its subcellular location is the cell projection. It is found in the lamellipodium. It localises to the ruffle. Its function is as follows. Cell membrane-cytoskeleton-associated protein that plays a role in the regulation of actin polymerization at the barbed end of actin filaments. Prevents F-actin heterodimeric capping protein (CP) activity at the leading edges of migrating cells, and hence generates uncapped barbed ends and enhances actin polymerization. Plays a role in cell protrusion formations; involved in cell polarity, lamellipodial assembly, membrane ruffling and macropinosome formations. Involved as well in cell migration and invadopodia formation during wound healing. Required for CD28-mediated stimulation of NF-kappa-B signaling, involved in naive T cells activation, maturation into T memory cells, and differentiation into T helper cells. Required for CD28-mediated differentiation of T regulatory cells. This chain is Capping protein, Arp2/3 and myosin-I linker protein 2, found in Mus musculus (Mouse).